Consider the following 404-residue polypeptide: Serine/threonine transporter SstT (404 aa).

9 helical membrane-spanning segments follow: residues 12-32 (GGNL…LALV), 53-73 (AIAP…KEVG), 81-101 (ILVM…VLSF), 140-160 (ALAN…GIAL), 177-197 (AVSF…FGLV), 216-236 (LGVL…LIVF), 287-307 (VAIP…VTVL), 329-349 (IVAS…LLLI), and 356-376 (FNIP…IGVI).

This sequence belongs to the dicarboxylate/amino acid:cation symporter (DAACS) (TC 2.A.23) family.

It localises to the cell inner membrane. It carries out the reaction L-serine(in) + Na(+)(in) = L-serine(out) + Na(+)(out). The enzyme catalyses L-threonine(in) + Na(+)(in) = L-threonine(out) + Na(+)(out). In terms of biological role, involved in the import of serine and threonine into the cell, with the concomitant import of sodium (symport system). In Actinobacillus pleuropneumoniae serotype 7 (strain AP76), this protein is Serine/threonine transporter SstT.